Reading from the N-terminus, the 328-residue chain is Methionyl-tRNA formyltransferase (328 aa).

110-113 (SLLP) serves as a coordination point for (6S)-5,6,7,8-tetrahydrofolate.

This sequence belongs to the Fmt family.

It catalyses the reaction L-methionyl-tRNA(fMet) + (6R)-10-formyltetrahydrofolate = N-formyl-L-methionyl-tRNA(fMet) + (6S)-5,6,7,8-tetrahydrofolate + H(+). Its function is as follows. Attaches a formyl group to the free amino group of methionyl-tRNA(fMet). The formyl group appears to play a dual role in the initiator identity of N-formylmethionyl-tRNA by promoting its recognition by IF2 and preventing the misappropriation of this tRNA by the elongation apparatus. This chain is Methionyl-tRNA formyltransferase, found in Prochlorococcus marinus (strain MIT 9312).